A 134-amino-acid chain; its full sequence is ATP synthase epsilon chain (134 aa).

It belongs to the ATPase epsilon chain family. As to quaternary structure, F-type ATPases have 2 components, CF(1) - the catalytic core - and CF(0) - the membrane proton channel. CF(1) has five subunits: alpha(3), beta(3), gamma(1), delta(1), epsilon(1). CF(0) has three main subunits: a, b and c.

The protein resides in the cell membrane. Its function is as follows. Produces ATP from ADP in the presence of a proton gradient across the membrane. The chain is ATP synthase epsilon chain from Ruminococcus albus (strain ATCC 27210 / DSM 20455 / JCM 14654 / NCDO 2250 / 7).